We begin with the raw amino-acid sequence, 371 residues long: tRNA-specific 2-thiouridylase MnmA (371 aa).

Residues 13–20 and M39 each bind ATP; that span reads GMSGGVDS. Positions 99 to 101 are interaction with target base in tRNA; it reads NPD. C104 (nucleophile) is an active-site residue. The cysteines at positions 104 and 200 are disulfide-linked. G128 contacts ATP. The tract at residues 150 to 152 is interaction with tRNA; it reads KDQ. Catalysis depends on C200, which acts as the Cysteine persulfide intermediate. Residues 308 to 309 are interaction with tRNA; the sequence is RY.

It belongs to the MnmA/TRMU family.

The protein resides in the cytoplasm. It carries out the reaction S-sulfanyl-L-cysteinyl-[protein] + uridine(34) in tRNA + AH2 + ATP = 2-thiouridine(34) in tRNA + L-cysteinyl-[protein] + A + AMP + diphosphate + H(+). Its function is as follows. Catalyzes the 2-thiolation of uridine at the wobble position (U34) of tRNA, leading to the formation of s(2)U34. This is tRNA-specific 2-thiouridylase MnmA from Listeria innocua serovar 6a (strain ATCC BAA-680 / CLIP 11262).